Consider the following 312-residue polypeptide: Acetaldehyde dehydrogenase 2 (312 aa).

Position 11 to 14 (11 to 14) interacts with NAD(+); that stretch reads SGNI. Residue C129 is the Acyl-thioester intermediate of the active site. NAD(+)-binding positions include 160–168 and N287; that span reads SAGPGTRAN.

It belongs to the acetaldehyde dehydrogenase family.

It catalyses the reaction acetaldehyde + NAD(+) + CoA = acetyl-CoA + NADH + H(+). The polypeptide is Acetaldehyde dehydrogenase 2 (Novosphingobium aromaticivorans (strain ATCC 700278 / DSM 12444 / CCUG 56034 / CIP 105152 / NBRC 16084 / F199)).